We begin with the raw amino-acid sequence, 256 residues long: Probable serine/threonine-protein kinase YbdM (256 aa).

One can recognise a Protein kinase domain in the interval 25-256; sequence YKIEECLGMG…DLNRAIQSVT (232 aa). ATP contacts are provided by residues 31-39 and Lys-54; that span reads LGMGGYGLV. Asp-149 serves as the catalytic Proton acceptor.

Belongs to the protein kinase superfamily. Ser/Thr protein kinase family.

The enzyme catalyses L-seryl-[protein] + ATP = O-phospho-L-seryl-[protein] + ADP + H(+). It carries out the reaction L-threonyl-[protein] + ATP = O-phospho-L-threonyl-[protein] + ADP + H(+). The chain is Probable serine/threonine-protein kinase YbdM (ybdM) from Bacillus subtilis (strain 168).